The chain runs to 360 residues: 3-isopropylmalate dehydrogenase (360 aa).

76 to 89 is an NAD(+) binding site; the sequence is GPKWDKIERDIRPE. The substrate site is built by Arg96, Arg106, Arg134, and Asp224. Asp224, Asp248, and Asp252 together coordinate Mg(2+). 282-294 serves as a coordination point for NAD(+); the sequence is GSAPDIAGQGIAN.

The protein belongs to the isocitrate and isopropylmalate dehydrogenases family. LeuB type 1 subfamily. Homodimer. It depends on Mg(2+) as a cofactor. Mn(2+) is required as a cofactor.

Its subcellular location is the cytoplasm. It catalyses the reaction (2R,3S)-3-isopropylmalate + NAD(+) = 4-methyl-2-oxopentanoate + CO2 + NADH. It functions in the pathway amino-acid biosynthesis; L-leucine biosynthesis; L-leucine from 3-methyl-2-oxobutanoate: step 3/4. Its function is as follows. Catalyzes the oxidation of 3-carboxy-2-hydroxy-4-methylpentanoate (3-isopropylmalate) to 3-carboxy-4-methyl-2-oxopentanoate. The product decarboxylates to 4-methyl-2 oxopentanoate. The sequence is that of 3-isopropylmalate dehydrogenase from Pseudomonas fluorescens (strain ATCC BAA-477 / NRRL B-23932 / Pf-5).